Reading from the N-terminus, the 287-residue chain is MIIAVYGKGGVGKSTTTSNLAVAIAKTGRRVLQIGCDPKSDSTFTIAGRMIPTVVEILDKFNYHYESIEPDDLVVQGYAGVCVVETGGPPAGSGCGGYVVGETVKLLEKLDIMRQYDVILFDVLGDVVCGGFATPLQYADLACIVSSNDFDALFAANRICESIVEKNASGYDVKLAGVIGNRCDQVDLLETFTRRIEAPLMGVVPRNEEVRQSRVKGYTLFELEEMGEPVSEMTGEFRKMAAYLLSQPDGVVPNAVGTREMFELFRGEDLPWKGSNGKTAASTPSVP.

ATP is bound by residues 10 to 15 (GVGKST) and Lys39. Ser14 contributes to the Mg(2+) binding site. 2 residues coordinate [4Fe-4S] cluster: Cys95 and Cys129. 181 to 182 (NR) lines the ATP pocket.

It belongs to the NifH/BchL/ChlL family. As to quaternary structure, homodimer. Protochlorophyllide reductase is composed of three subunits; BchL, BchN and BchB. It depends on [4Fe-4S] cluster as a cofactor.

It catalyses the reaction chlorophyllide a + oxidized 2[4Fe-4S]-[ferredoxin] + 2 ADP + 2 phosphate = protochlorophyllide a + reduced 2[4Fe-4S]-[ferredoxin] + 2 ATP + 2 H2O. It functions in the pathway porphyrin-containing compound metabolism; bacteriochlorophyll biosynthesis (light-independent). Its function is as follows. Component of the dark-operative protochlorophyllide reductase (DPOR) that uses Mg-ATP and reduced ferredoxin to reduce ring D of protochlorophyllide (Pchlide) to form chlorophyllide a (Chlide). This reaction is light-independent. The L component serves as a unique electron donor to the NB-component of the complex, and binds Mg-ATP. This Heliobacterium modesticaldum (strain ATCC 51547 / Ice1) protein is Light-independent protochlorophyllide reductase iron-sulfur ATP-binding protein.